The sequence spans 290 residues: Protease HtpX (290 aa).

2 helical membrane passes run 12–32 (IAVMVLISLVFSLFGFQGLLA) and 42–62 (ALLVYSAVIGFSGSIISLLIS). His-147 is a binding site for Zn(2+). The active site involves Glu-148. His-151 contacts Zn(2+). Transmembrane regions (helical) follow at residues 162 to 182 (LIQGVLNTFVVFLSRVIGHVV) and 197 to 217 (FWIVSIISQVILGILASMIVM). Glu-224 is a Zn(2+) binding site.

This sequence belongs to the peptidase M48B family. The cofactor is Zn(2+).

Its subcellular location is the cell inner membrane. The chain is Protease HtpX from Pseudoalteromonas atlantica (strain T6c / ATCC BAA-1087).